The sequence spans 332 residues: Tumor necrosis factor receptor superfamily member 6 (332 aa).

The signal sequence occupies residues 1 to 16 (MSGIWVLLSLVFTCIA). Residues 17-175 (GPLSKGDDAQ…VFQSAGSRSN (159 aa)) lie on the Extracellular side of the membrane. N38 is a glycosylation site (N-linked (GlcNAc...) asparagine). TNFR-Cys repeat units follow at residues 45 to 81 (ECPE…PQCV), 82 to 125 (PCSE…NTKC), and 126 to 164 (RCKP…TKCR). 9 cysteine pairs are disulfide-bonded: C46–C57, C58–C71, C61–C80, C83–C99, C102–C117, C105–C125, C127–C141, C144–C155, and C147–C163. The N-linked (GlcNAc...) asparagine glycan is linked to N116. A helical transmembrane segment spans residues 176 to 192 (LHWLWALLILIPVPALV). The Cytoplasmic segment spans residues 193 to 332 (YREVKRRCRR…NSQNENESLT (140 aa)). C200 carries the S-palmitoyl cysteine lipid modification. Positions 210 to 314 (PITSNAEEVP…DKINDIVQKD (105 aa)) are interaction with HIPK3. A Phosphothreonine modification is found at T212. The interaction with CALM stretch occupies residues 227–251 (GKYITRIAEQMKITEVKDFVRKNGI). Residues 227–311 (GKYITRIAEQ…ALADKINDIV (85 aa)) enclose the Death domain.

As to quaternary structure, component of the death-induced signaling complex (DISC) composed of cell surface receptor FAS/CD95, adapter protein FADD and the CASP8 protease; recruitment of CASP8 to the complex is required for processing of CASP8 into the p18 and p10 subunits. Interacts directly (via DED domain) with NOL3 (via CARD domain); inhibits death-inducing signaling complex (DISC) assembly by inhibiting the increase in FAS-FADD binding induced by FAS activation. Binds DAXX. Interacts with HIPK3. Part of a complex containing HIPK3 and FADD. Binds RIPK1 and FAIM2. Interacts with BABAM2 and FEM1B. Interacts with CALM. In the absence of stimulation, interacts with BIRC2, DDX3X and GSK3B. The interaction with BIRC2 and DDX3X is further enhanced upon receptor stimulation and accompanied by DDX3X and BIRC2 cleavage. Palmitoylated. Palmitoylation by ZDHHC7 prevents the lysosomal degradation of FAS regulating its expression at the plasma membrane.

It localises to the cell membrane. It is found in the membrane raft. In terms of biological role, receptor for TNFSF6/FASLG. The adapter molecule FADD recruits caspase CASP8 to the activated receptor. The resulting death-inducing signaling complex (DISC) performs CASP8 proteolytic activation which initiates the subsequent cascade of caspases (aspartate-specific cysteine proteases) mediating apoptosis. FAS-mediated apoptosis may have a role in the induction of peripheral tolerance, in the antigen-stimulated suicide of mature T-cells, or both. This is Tumor necrosis factor receptor superfamily member 6 (FAS) from Sus scrofa (Pig).